Consider the following 130-residue polypeptide: Small ribosomal subunit protein uS11 (130 aa).

It belongs to the universal ribosomal protein uS11 family. In terms of assembly, part of the 30S ribosomal subunit. Interacts with proteins S7 and S18. Binds to IF-3.

In terms of biological role, located on the platform of the 30S subunit, it bridges several disparate RNA helices of the 16S rRNA. Forms part of the Shine-Dalgarno cleft in the 70S ribosome. The chain is Small ribosomal subunit protein uS11 from Campylobacter curvus (strain 525.92).